The primary structure comprises 227 residues: Cytidylate kinase (227 aa).

12–20 (GPSGAGKGT) contributes to the ATP binding site.

Belongs to the cytidylate kinase family. Type 1 subfamily.

The protein localises to the cytoplasm. The catalysed reaction is CMP + ATP = CDP + ADP. It catalyses the reaction dCMP + ATP = dCDP + ADP. The protein is Cytidylate kinase of Xanthomonas euvesicatoria pv. vesicatoria (strain 85-10) (Xanthomonas campestris pv. vesicatoria).